A 92-amino-acid chain; its full sequence is Small ribosomal subunit protein uS19 (92 aa).

This sequence belongs to the universal ribosomal protein uS19 family.

In terms of biological role, protein S19 forms a complex with S13 that binds strongly to the 16S ribosomal RNA. The sequence is that of Small ribosomal subunit protein uS19 from Methylobacterium radiotolerans (strain ATCC 27329 / DSM 1819 / JCM 2831 / NBRC 15690 / NCIMB 10815 / 0-1).